The following is a 231-amino-acid chain: Isoprenyl transferase (231 aa).

Asp-14 is a catalytic residue. A Mg(2+)-binding site is contributed by Asp-14. Residues 15–18 (GNGR), Trp-19, Arg-27, His-31, and 59–61 (STE) contribute to the substrate site. Catalysis depends on Asn-62, which acts as the Proton acceptor. Substrate is bound by residues Trp-63, Arg-65, Arg-176, and 182–184 (RIS). Residue Glu-195 participates in Mg(2+) binding.

Belongs to the UPP synthase family. Homodimer. Mg(2+) is required as a cofactor.

Functionally, catalyzes the condensation of isopentenyl diphosphate (IPP) with allylic pyrophosphates generating different type of terpenoids. This Aquifex pyrophilus protein is Isoprenyl transferase.